The sequence spans 250 residues: UPF0524 protein C3orf70 homolog (250 aa).

The tract at residues 201–250 (ESCDEDTEEGAELSSEEDYSPESSWEPDECTLLSPSQSDLEVIETIETTV) is disordered. A compositionally biased stretch (acidic residues) spans 202-229 (SCDEDTEEGAELSSEEDYSPESSWEPDE).

The protein belongs to the UPF0524 family.

Its function is as follows. May play a role in neuronal and neurobehavioral development. The polypeptide is UPF0524 protein C3orf70 homolog (Bos taurus (Bovine)).